A 165-amino-acid polypeptide reads, in one-letter code: 2-halobenzoate 1,2-dioxygenase small subunit (165 aa).

Belongs to the bacterial ring-hydroxylating dioxygenase beta subunit family. Heterohexamer of 3 large (CbdA) subunits and 3 small (CbdB) subunits. The heterohexamer is part of 2-halobenzoate dioxygenase two component enzyme system. The other component is a NADH:acceptor reductase (CdbC).

The catalysed reaction is a 2-halobenzoate + NADH + O2 + H(+) = a halide anion + catechol + CO2 + NAD(+). The protein operates within xenobiotic degradation; benzoate degradation via CoA ligation. Its function is as follows. Component of 2-halobenzoate dioxygenase multicomponent enzyme system which catalyzes the incorporation of both atoms of molecular oxygen into 2-halobenzoate to form catechol. The sequence is that of 2-halobenzoate 1,2-dioxygenase small subunit (cbdB) from Burkholderia cepacia (Pseudomonas cepacia).